Here is a 330-residue protein sequence, read N- to C-terminus: MDFTPNSAINHLNLKFDDVPVSDDFSKDDLAEQLNVFTNPYFLDLEPSSMLSEGYYGFVSQPSGSSNSNKQEKNVQQQNPEKISTLQQVKEEEVSNTFSAPLNATGNFSSANPASIDLAYLDLQKLLTLPDHSKETQEKTSSQRELFEQKSSVASASKDNVSSSSILQGSASSKLLPDQSARQHQVLVGQTAIPTSEASSSINNTPLQAPVSSFADQNAFTNPLSTFASPDLASVSSPSLSSYKGAQSPNANSKRTKATSAIRTAAEEDKRRRNTAASARFRIKKKLKEQQLERTAKELTEKVAILETRVRELEMENNWLKGLIRPTSNF.

Over residues 133–148 (SKETQEKTSSQRELFE) the composition is skewed to basic and acidic residues. Disordered regions lie at residues 133–165 (SKET…SSSS) and 238–277 (PSLS…NTAA). Residues 150–165 (KSSVASASKDNVSSSS) show a composition bias toward low complexity. Residues 244–262 (KGAQSPNANSKRTKATSAI) show a composition bias toward polar residues. The bZIP domain maps to 264-327 (TAAEEDKRRR…NWLKGLIRPT (64 aa)). A basic motif region spans residues 270–288 (KRRRNTAASARFRIKKKLK). Positions 292–320 (LERTAKELTEKVAILETRVRELEMENNWL) are leucine-zipper.

This sequence belongs to the bZIP family. Interacts with pof1.

Its subcellular location is the nucleus. In terms of biological role, mediates cell growth arrest in response to cadmium exposure, which is essential to maintain cell viability. Regulates cadmium stress specific genes. This chain is Transcription factor zip1 (zip1), found in Schizosaccharomyces pombe (strain 972 / ATCC 24843) (Fission yeast).